Reading from the N-terminus, the 175-residue chain is uncharacterized protein (175 aa).

Polar residues predominate over residues 1–14; it reads MNTSSRIQLPSSND. Disordered regions lie at residues 1–31 and 127–175; these read MNTS…SKRS and ARSR…QSKR. Residues 16–27 show a composition bias toward basic and acidic residues; it reads HVYDGRSNEPKA. The segment covering 130-149 has biased composition (low complexity); the sequence is RASSVSNSRLNSRTNSSVSL. A compositionally biased stretch (polar residues) spans 154-175; sequence GSSSWKNKIKNAVSNVTDQSKR.

It is found in the cytoplasm. The protein resides in the nucleus. This is an uncharacterized protein from Schizosaccharomyces pombe (strain 972 / ATCC 24843) (Fission yeast).